We begin with the raw amino-acid sequence, 212 residues long: Phosphatidylserine decarboxylase proenzyme (212 aa).

The active-site Schiff-base intermediate with substrate; via pyruvic acid is the Ser182. A Pyruvic acid (Ser); by autocatalysis modification is found at Ser182.

It belongs to the phosphatidylserine decarboxylase family. PSD-A subfamily. Heterodimer of a large membrane-associated beta subunit and a small pyruvoyl-containing alpha subunit. Pyruvate is required as a cofactor. Is synthesized initially as an inactive proenzyme. Formation of the active enzyme involves a self-maturation process in which the active site pyruvoyl group is generated from an internal serine residue via an autocatalytic post-translational modification. Two non-identical subunits are generated from the proenzyme in this reaction, and the pyruvate is formed at the N-terminus of the alpha chain, which is derived from the carboxyl end of the proenzyme. The post-translation cleavage follows an unusual pathway, termed non-hydrolytic serinolysis, in which the side chain hydroxyl group of the serine supplies its oxygen atom to form the C-terminus of the beta chain, while the remainder of the serine residue undergoes an oxidative deamination to produce ammonia and the pyruvoyl prosthetic group on the alpha chain.

The protein localises to the cell membrane. It carries out the reaction a 1,2-diacyl-sn-glycero-3-phospho-L-serine + H(+) = a 1,2-diacyl-sn-glycero-3-phosphoethanolamine + CO2. It functions in the pathway phospholipid metabolism; phosphatidylethanolamine biosynthesis; phosphatidylethanolamine from CDP-diacylglycerol: step 2/2. Its function is as follows. Catalyzes the formation of phosphatidylethanolamine (PtdEtn) from phosphatidylserine (PtdSer). The chain is Phosphatidylserine decarboxylase proenzyme from Chlorobium chlorochromatii (strain CaD3).